The sequence spans 590 residues: Plasmepsin V (590 aa).

Over 1–544 (MNNYFLRKEN…EKENIFLKVS (544 aa)) the chain is Lumenal. Residues 33 to 81 (CNNVENKIDNVGKKIENVGKKIGDMENKNDNVENKNDNVGNKNDNVKNA) adopt a coiled-coil conformation. In terms of domain architecture, Peptidase A1 spans 100 to 514 (YFLDIDIGKP…DLQQNQIAFI (415 aa)). The active site involves Asp118. 7 cysteine pairs are disulfide-bonded: Cys128–Cys211, Cys131–Cys134, Cys155–Cys166, Cys160–Cys171, Cys259–Cys518, Cys389–Cys434, and Cys443–Cys479. Over residues 282–291 (KEKQKMDKSD) the composition is skewed to basic and acidic residues. The tract at residues 282–316 (KEKQKMDKSDNNSSNKGNVSIKLKNNDKNDDEENN) is disordered. Positions 292–304 (NNSSNKGNVSIKL) are enriched in low complexity. Asp365 is an active-site residue. A helical membrane pass occupies residues 545 to 565 (YINLYCLWLLLALTILLSLIL). Over 566 to 590 (YVRKMFYMDYFPLSDQNKSPIQEST) the chain is Cytoplasmic.

Belongs to the peptidase A1 family. Component of a complex composed of SPC25 and PMV; the interaction is mediated via the transmembrane domains. The complex interacts with the SEC61 channel-forming translocon complex and is involved in the recognition and import of PEXEL motif-containing proteins into the ER for subsequent export. Post-translationally, it is not clear if the zymogen has a cleavable propeptide. In vitro, appears to be cleaved between Asn-80 and Ala-81. Cleavage of the putative propeptide is dispensable for catalytic activity.

The protein localises to the endoplasmic reticulum membrane. With respect to regulation, inhibited by peptidomimetic inhibitor WEHI-842. Inhibited by Cu(2+) and Hg(2+). During the asexual blood stage, plays an essential role in the export of several proteins into the host erythrocytes by cleaving the pentameric localization motif RxLxE/Q/D (termed Plasmodium export element (PEXEL)) located downstream of the N-terminal secretory signal sequence. Specifically, cleaves after the leucine residue in the RxLxE/Q/D (or RxLxxE) motif of exported proteins including RESA, EMP2, EMP3, KAHRP, RIF/Rifin and STEVOR. Also, by regulating protein export, plays an essential role in gametocyte development and thus, parasite transmission to the mosquito vector. In Plasmodium falciparum (isolate 3D7), this protein is Plasmepsin V.